Reading from the N-terminus, the 489-residue chain is Bypass of stop codon protein 5 (489 aa).

The disordered stretch occupies residues 1–42 (MQESKEPQNKFEGCQRISSSSSTLFGGTSFEEPRCGTSQGKE). A compositionally biased stretch (low complexity) spans 18–30 (SSSSSTLFGGTSF). Phosphoserine is present on residues Ser111 and Ser350.

This sequence belongs to the BUL1 family.

Its function is as follows. Appears to play a role in translation fidelity, and may act when translation is compromised. May be a component of the ubiquitination pathway. In Saccharomyces cerevisiae (strain ATCC 204508 / S288c) (Baker's yeast), this protein is Bypass of stop codon protein 5 (BSC5).